A 189-amino-acid chain; its full sequence is Prostaglandin-H2 D-isomerase (189 aa).

An N-terminal signal peptide occupies residues 1–24 (MAALRMLWMGLVLLGLLGFPQTPA). Q25 bears the Pyrrolidone carboxylic acid mark. N51 carries an N-linked (GlcNAc...) asparagine glycan. The active-site Nucleophile is the C65. N78 carries an N-linked (GlcNAc...) asparagine glycan. The cysteines at positions 89 and 186 are disulfide-linked.

The protein belongs to the calycin superfamily. Lipocalin family. In terms of assembly, monomer. As to expression, abundant in the brain and CNS, where it is expressed in tissues of the blood-brain barrier and secreted into the cerebro-spinal fluid. In the male reproductive system, it is expressed in the testis, efferent ducts and epididymis, and is secreted into the seminal fluid. In the eye, it is expressed in the pigmented epithelium of the retina and the nonpigmented epithelium of the ciliary body, and secreted into the aqueous humor. Low levels detected in various tissue fluids such as serum, normal urine, ascitic fluid and tear fluid. Also found in a number of other organs including the ear, heart and lung.

It is found in the rough endoplasmic reticulum. The protein resides in the nucleus membrane. The protein localises to the golgi apparatus. It localises to the cytoplasm. Its subcellular location is the perinuclear region. It is found in the secreted. The catalysed reaction is prostaglandin H2 = prostaglandin D2. Catalyzes the conversion of PGH2 to PGD2, a prostaglandin involved in smooth muscle contraction/relaxation and a potent inhibitor of platelet aggregation. Involved in a variety of CNS functions, such as sedation, NREM sleep and PGE2-induced allodynia, and may have an anti-apoptotic role in oligodendrocytes. Binds small non-substrate lipophilic molecules, including biliverdin, bilirubin, retinal, retinoic acid and thyroid hormone, and may act as a scavenger for harmful hydrophobic molecules and as a secretory retinoid and thyroid hormone transporter. Possibly involved in development and maintenance of the blood-brain, blood-retina, blood-aqueous humor and blood-testis barrier. It is likely to play important roles in both maturation and maintenance of the central nervous system and male reproductive system. Involved in PLA2G3-dependent maturation of mast cells. PLA2G3 is secreted by immature mast cells and acts on nearby fibroblasts upstream to PTDGS to synthesize PGD2, which in turn promotes mast cell maturation and degranulation via PTGDR. The chain is Prostaglandin-H2 D-isomerase (Ptgds) from Mus musculus (Mouse).